A 288-amino-acid chain; its full sequence is Homoserine kinase (288 aa).

79-89 (PPARGLGSSSA) provides a ligand contact to ATP.

This sequence belongs to the GHMP kinase family. Homoserine kinase subfamily.

The protein resides in the cytoplasm. The enzyme catalyses L-homoserine + ATP = O-phospho-L-homoserine + ADP + H(+). The protein operates within amino-acid biosynthesis; L-threonine biosynthesis; L-threonine from L-aspartate: step 4/5. Its function is as follows. Catalyzes the ATP-dependent phosphorylation of L-homoserine to L-homoserine phosphate. In Listeria monocytogenes serotype 4b (strain CLIP80459), this protein is Homoserine kinase.